Consider the following 238-residue polypeptide: Ribonuclease PH (238 aa).

Phosphate contacts are provided by residues Arg-86 and 124–126 (GTR).

This sequence belongs to the RNase PH family. In terms of assembly, homohexameric ring arranged as a trimer of dimers.

The enzyme catalyses tRNA(n+1) + phosphate = tRNA(n) + a ribonucleoside 5'-diphosphate. Functionally, phosphorolytic 3'-5' exoribonuclease that plays an important role in tRNA 3'-end maturation. Removes nucleotide residues following the 3'-CCA terminus of tRNAs; can also add nucleotides to the ends of RNA molecules by using nucleoside diphosphates as substrates, but this may not be physiologically important. Probably plays a role in initiation of 16S rRNA degradation (leading to ribosome degradation) during starvation. The sequence is that of Ribonuclease PH from Rhizobium rhizogenes (strain K84 / ATCC BAA-868) (Agrobacterium radiobacter).